The primary structure comprises 142 residues: Large ribosomal subunit protein uL11 (142 aa).

The protein belongs to the universal ribosomal protein uL11 family. As to quaternary structure, part of the ribosomal stalk of the 50S ribosomal subunit. Interacts with L10 and the large rRNA to form the base of the stalk. L10 forms an elongated spine to which L12 dimers bind in a sequential fashion forming a multimeric L10(L12)X complex. Post-translationally, one or more lysine residues are methylated.

Its function is as follows. Forms part of the ribosomal stalk which helps the ribosome interact with GTP-bound translation factors. This chain is Large ribosomal subunit protein uL11, found in Shigella boydii serotype 4 (strain Sb227).